We begin with the raw amino-acid sequence, 448 residues long: N-succinylarginine dihydrolase (448 aa).

Residues 19 to 28 (GGLSYGNVAS), Asn110, and 137 to 138 (HR) contribute to the substrate site. Glu174 is an active-site residue. Position 214 (Arg214) interacts with substrate. His250 is a catalytic residue. Positions 252 and 365 each coordinate substrate. The Nucleophile role is filled by Cys371.

This sequence belongs to the succinylarginine dihydrolase family. In terms of assembly, homodimer.

It carries out the reaction N(2)-succinyl-L-arginine + 2 H2O + 2 H(+) = N(2)-succinyl-L-ornithine + 2 NH4(+) + CO2. The protein operates within amino-acid degradation; L-arginine degradation via AST pathway; L-glutamate and succinate from L-arginine: step 2/5. Catalyzes the hydrolysis of N(2)-succinylarginine into N(2)-succinylornithine, ammonia and CO(2). The polypeptide is N-succinylarginine dihydrolase (Pseudomonas paraeruginosa (strain DSM 24068 / PA7) (Pseudomonas aeruginosa (strain PA7))).